A 202-amino-acid polypeptide reads, in one-letter code: MKMQSDFNSMFEEFQRHVDVPDQLLNALKHMAKGRNYYWGSSYETDESLSGRFSRGKKSLIRPGILINSIESIHSLTCDFDVEFTDFISPEWSVCYLNDDFDYLGVYSLSDAWFKRNLQKSNLFYIDTTVKFQGKKYFFTLIVDSETKHENKRILSKRNILNIVDDLFDKLVENPNFESDLLLEKFVKECREYVKAITIPSK.

This is an uncharacterized protein from Escherichia coli (Bacteriophage T4).